The sequence spans 960 residues: Probable RNA-binding protein 19 (960 aa).

The RRM 1 domain occupies 2 to 79; sequence SRLIVKNLPN…SRITVEFCKS (78 aa). Disordered regions lie at residues 85-119 and 149-294; these read KPRAWSKHAQKPSQPKQPPKDSTTPEIKKDEKKKK and WAND…TTCH. 3 positions are modified to phosphoserine: Ser174, Ser176, and Ser180. Positions 176–194 are enriched in acidic residues; the sequence is SGQESEEEGAGEDLEEEAS. The segment covering 273 to 286 has biased composition (basic and acidic residues); it reads RPPEARAETEKPAN. RRM domains follow at residues 294 to 369 and 402 to 480; these read HTVK…REKN and GRLF…PSTI. A Glycyl lysine isopeptide (Lys-Gly) (interchain with G-Cter in SUMO2) cross-link involves residue Lys481. A disordered region spans residues 491–513; it reads LGSSSYKKKKEAQDKANSASSHN. The 73-residue stretch at 587-659 folds into the RRM 4 domain; sequence TVILVKNLPA…VPLYLEWAPV (73 aa). Residues 667–729 are disordered; sequence PQKKKLQDTP…EEEEEESLPG (63 aa). Acidic residues-rich tracts occupy residues 689-706 and 714-726; these read TVPDGETPEDENPTEEGA and EEEEEEEEEEEES. RRM domains lie at 730–811 and 832–912; these read CTLF…ISER and SKIL…WADS. 3 positions are modified to phosphoserine: Ser936, Ser949, and Ser951.

Belongs to the RRM MRD1 family. In terms of tissue distribution, expressed in the crypts of Lieberkuhn of the intestine and in intestinal neoplasia (at protein level).

The protein resides in the nucleus. It is found in the nucleolus. The protein localises to the nucleoplasm. Its subcellular location is the cytoplasm. It localises to the chromosome. Its function is as follows. Plays a role in embryo pre-implantation development. This is Probable RNA-binding protein 19 (RBM19) from Homo sapiens (Human).